A 337-amino-acid polypeptide reads, in one-letter code: GTPase Obg (337 aa).

The Obg domain occupies 4–162 (SNFIDYVKVC…AWVILELKVL (159 aa)). Residues 163–329 (ADVGLVGFPN…LKDLLWTTMN (167 aa)) enclose the OBG-type G domain. GTP contacts are provided by residues 169–176 (GFPNAGKS), 194–198 (FTTLA), 216–219 (DIPG), 283–286 (SKSD), and 310–312 (SSY). Residues Ser176 and Thr196 each contribute to the Mg(2+) site.

The protein belongs to the TRAFAC class OBG-HflX-like GTPase superfamily. OBG GTPase family. As to quaternary structure, monomer. Mg(2+) is required as a cofactor.

It localises to the cytoplasm. Functionally, an essential GTPase which binds GTP, GDP and possibly (p)ppGpp with moderate affinity, with high nucleotide exchange rates and a fairly low GTP hydrolysis rate. Plays a role in control of the cell cycle, stress response, ribosome biogenesis and in those bacteria that undergo differentiation, in morphogenesis control. The polypeptide is GTPase Obg (Cytophaga hutchinsonii (strain ATCC 33406 / DSM 1761 / CIP 103989 / NBRC 15051 / NCIMB 9469 / D465)).